We begin with the raw amino-acid sequence, 124 residues long: Small ribosomal subunit protein bS6 (124 aa).

The tract at residues 96–124 (ETAPSPMMKEVQREEARKAAQTTTEGQAA) is disordered. Residues 115-124 (AQTTTEGQAA) are compositionally biased toward polar residues.

Belongs to the bacterial ribosomal protein bS6 family.

Its function is as follows. Binds together with bS18 to 16S ribosomal RNA. This chain is Small ribosomal subunit protein bS6, found in Cupriavidus necator (strain ATCC 17699 / DSM 428 / KCTC 22496 / NCIMB 10442 / H16 / Stanier 337) (Ralstonia eutropha).